Reading from the N-terminus, the 503-residue chain is Probable cytosol aminopeptidase (503 aa).

Mn(2+) is bound by residues lysine 270 and aspartate 275. Residue lysine 282 is part of the active site. Positions 293, 352, and 354 each coordinate Mn(2+). Arginine 356 is a catalytic residue.

Belongs to the peptidase M17 family. Requires Mn(2+) as cofactor.

The protein localises to the cytoplasm. It catalyses the reaction Release of an N-terminal amino acid, Xaa-|-Yaa-, in which Xaa is preferably Leu, but may be other amino acids including Pro although not Arg or Lys, and Yaa may be Pro. Amino acid amides and methyl esters are also readily hydrolyzed, but rates on arylamides are exceedingly low.. The enzyme catalyses Release of an N-terminal amino acid, preferentially leucine, but not glutamic or aspartic acids.. Its function is as follows. Presumably involved in the processing and regular turnover of intracellular proteins. Catalyzes the removal of unsubstituted N-terminal amino acids from various peptides. This is Probable cytosol aminopeptidase from Klebsiella pneumoniae subsp. pneumoniae (strain ATCC 700721 / MGH 78578).